We begin with the raw amino-acid sequence, 504 residues long: Glucose-6-phosphate isomerase (504 aa).

The active-site Proton donor is Glu-333. Catalysis depends on residues His-364 and Lys-473.

It belongs to the GPI family.

Its subcellular location is the cytoplasm. It catalyses the reaction alpha-D-glucose 6-phosphate = beta-D-fructose 6-phosphate. Its pathway is carbohydrate biosynthesis; gluconeogenesis. It functions in the pathway carbohydrate degradation; glycolysis; D-glyceraldehyde 3-phosphate and glycerone phosphate from D-glucose: step 2/4. Its function is as follows. Catalyzes the reversible isomerization of glucose-6-phosphate to fructose-6-phosphate. This chain is Glucose-6-phosphate isomerase, found in Xanthomonas axonopodis pv. citri (strain 306).